We begin with the raw amino-acid sequence, 388 residues long: Formate-dependent phosphoribosylglycinamide formyltransferase (388 aa).

Residues 15 to 16 and Glu75 each bind N(1)-(5-phospho-beta-D-ribosyl)glycinamide; that span reads EL. Residues Arg107, Lys148, 153–158, 188–191, and Glu196 contribute to the ATP site; these read SSGKGQ and EEFL. The ATP-grasp domain maps to 112-302; the sequence is DLAAGELALR…EFELHLRAVL (191 aa). Residues Glu261 and Glu273 each contribute to the Mg(2+) site. Residues Asp280, Lys350, and 357–358 each bind N(1)-(5-phospho-beta-D-ribosyl)glycinamide; that span reads RR.

Belongs to the PurK/PurT family. In terms of assembly, homodimer.

It catalyses the reaction N(1)-(5-phospho-beta-D-ribosyl)glycinamide + formate + ATP = N(2)-formyl-N(1)-(5-phospho-beta-D-ribosyl)glycinamide + ADP + phosphate + H(+). It participates in purine metabolism; IMP biosynthesis via de novo pathway; N(2)-formyl-N(1)-(5-phospho-D-ribosyl)glycinamide from N(1)-(5-phospho-D-ribosyl)glycinamide (formate route): step 1/1. Involved in the de novo purine biosynthesis. Catalyzes the transfer of formate to 5-phospho-ribosyl-glycinamide (GAR), producing 5-phospho-ribosyl-N-formylglycinamide (FGAR). Formate is provided by PurU via hydrolysis of 10-formyl-tetrahydrofolate. The sequence is that of Formate-dependent phosphoribosylglycinamide formyltransferase from Parasynechococcus marenigrum (strain WH8102).